The following is a 324-amino-acid chain: Protease HtpX homolog (324 aa).

2 consecutive transmembrane segments (helical) span residues 7 to 24 (ALLLAGLTALFMGVGYLI) and 29 to 46 (GALIALVVAAAMNIFTYW). Position 130 (His130) interacts with Zn(2+). Glu131 is a catalytic residue. Residue His134 participates in Zn(2+) binding. A run of 2 helical transmembrane segments spans residues 145-165 (ITATIAGAISMVAQFGMFFGG) and 172-192 (GPGLIGSLALMILAPLGAMLV). Glu201 is a Zn(2+) binding site. A compositionally biased stretch (polar residues) spans 288–305 (PASTFSRGAGTAASSGTP). Residues 288–324 (PASTFSRGAGTAASSGTPRGTGRSPWGGQPRGRGPWG) form a disordered region.

It belongs to the peptidase M48B family. It depends on Zn(2+) as a cofactor.

The protein resides in the cell inner membrane. The polypeptide is Protease HtpX homolog (Rhodopseudomonas palustris (strain TIE-1)).